Consider the following 365-residue polypeptide: Flavone synthase (365 aa).

Residues His76, His218, Asp220, and His276 each coordinate Fe cation. The Fe2OG dioxygenase domain occupies 194-295 (MEQKVLINYY…RLSIATFQNP (102 aa)). Residues 345–365 (RLQDEKAKLEMKSKSADENLA) are disordered.

The protein belongs to the iron/ascorbate-dependent oxidoreductase family. It depends on Fe cation as a cofactor. L-ascorbate serves as cofactor.

It is found in the cytoplasm. It catalyses the reaction a flavanone + 2-oxoglutarate + O2 = a flavone + succinate + CO2 + H2O. Its pathway is secondary metabolite biosynthesis; flavonoid biosynthesis. In terms of biological role, involved in the conversion of naringenin to apigenin. Acts via a direct 2,3-desaturation of flavanones instead of a sequential hydroxylation/dehydratation mechanism. This is Flavone synthase (FNSI) from Petroselinum crispum (Parsley).